Consider the following 97-residue polypeptide: Large ribosomal subunit protein bL28 (97 aa).

The protein belongs to the bacterial ribosomal protein bL28 family.

The protein is Large ribosomal subunit protein bL28 of Bartonella henselae (strain ATCC 49882 / DSM 28221 / CCUG 30454 / Houston 1) (Rochalimaea henselae).